Consider the following 542-residue polypeptide: MAAKEVRFSSDAREKMLRGVDTLANAVKVTLGPKGRNVVIEKSFGAPRITKDGVTVAKEIELDDKFENMGAQMVREVASKTNDLAGDGTTTATVLAQAIVKEGAKAVAAGMNPMDLKRGIDLAVEAVVKDLTKNAKKITSNSEIAQVATISANGDTEIGRFLAEAMQKVGNEGVITVEEAKSLETELEVVEGMQFDRGYVSPYFVTDAEKMRVEFEDPYVLIHEKKLSGLQAMVPLLESVVQSGKPLLVIAEDVEGEALATLVVNKLRGGLKVAAVKAPGFGDRRKAMLEDIAILTGGTAISEDLGIKLENVTLNMLGRAKKVVIDKENTTIVDGAGRKKDIEARVTQIKAQIEETTSDYDREKLQERLAKLAGGVAVIRVGGATEVEVKERKDRVDDAMHATRAAVEEGILPGGGVALLRALKALDAVKPDNPDQKAGVDIVRRAIQVPARQIIQNAGEDGSLVVGKLLEKNTYNWGFNAATGEYQDLVGVGVIDPAKVVRTALQDAASVASLLITTEALVAEKPKKDVAPALPPGGGMDF.

ATP contacts are provided by residues 30-33 (TLGP), Lys-51, 87-91 (DGTTT), Gly-415, 480-482 (NAA), and Asp-496.

It belongs to the chaperonin (HSP60) family. Forms a cylinder of 14 subunits composed of two heptameric rings stacked back-to-back. Interacts with the co-chaperonin GroES.

It localises to the cytoplasm. The catalysed reaction is ATP + H2O + a folded polypeptide = ADP + phosphate + an unfolded polypeptide.. In terms of biological role, together with its co-chaperonin GroES, plays an essential role in assisting protein folding. The GroEL-GroES system forms a nano-cage that allows encapsulation of the non-native substrate proteins and provides a physical environment optimized to promote and accelerate protein folding. This Nitrobacter winogradskyi (strain ATCC 25391 / DSM 10237 / CIP 104748 / NCIMB 11846 / Nb-255) protein is Chaperonin GroEL 1.